The primary structure comprises 802 residues: MGHPPLEFSDCYLDSPDFRERLKCYEQELERTNKFIKDVIKDGNALISAMRNYSSAVQKFSQTLQSFQFDFIGDTLTDDEINIAESFKEFAELLNEVENERMMMVHNASDLLIKPLENFRKEQIGFTKERKKKFEKDGERFYSLLDRHLHLSSKKKESQLQEADLQVDKERHNFFESSLDYVYQIQEVQESKKFNIVEPVLAFLHSLFISNSLTVELTQDFLPYKQQLQLSLQNTRNHFSSTREEMEELKKRMKEAPQTCKLPGQPTIEGYLYTQEKWALGISWVKYYCQYEKETKTLTMTPMEQKPGAKQGPLDLTLKYCVRRKTESIDKRFCFDIETNERPGTITLQALSEANRRLWMEAMDGKEPIYHSPITKQQEMELNEVGFKFVRKCINIIETKGIKTEGLYRTVGSNIQVQKLLNAFFDPKCPGDVDFHNSDWDIKTITSSLKFYLRNLSEPVMTYRLHKELVSAAKSDNLDYRLGAIHSLVYKLPEKNREMLELLIRHLVNVCEHSKENLMTPSNMGVIFGPTLMRAQEDTVAAMMNIKFQNIVVEILIEHFGKIYLGPPEESAAPPVPPPRVTARRHKPITISKRLLRERTVFYTSSLDESEDEIQHQTPNGTITSSIEPPKPPQHPKLPIQRSGETDPGRKSPSRPILDGKLEPCPEVDVGKLVSRLQDGGTKITPKATNGPMPGSGPTKTPSFHIKRPAPRPLAHHKEGDADSFSKVRPPGEKPTIIRPPVRPPDPPCRAATPQKPEPKPDIVAGNAGEITSSVVASRTRFFETASRKTGSSQGRLPGDES.

Residues 265–368 enclose the PH domain; that stretch reads QPTIEGYLYT…WMEAMDGKEP (104 aa). The region spanning 380 to 564 is the Rho-GAP domain; that stretch reads MELNEVGFKF…ILIEHFGKIY (185 aa). Disordered stretches follow at residues 569–588, 607–666, 680–770, and 783–802; these read EESA…RHKP, LDES…EPCP, GGTK…NAGE, and FETA…GDES. The segment covering 616-627 has biased composition (polar residues); sequence HQTPNGTITSSI. A compositionally biased stretch (basic and acidic residues) spans 716-732; sequence HHKEGDADSFSKVRPPG.

In terms of assembly, interacts with HOMER1. Interacts with AMPA receptor complexes. Interacts with SH3GL2 (endophilin-A1). Interacts (via C-terminus) with NR1D1. Expressed in brain.

The protein resides in the postsynapse. It is found in the presynapse. Its subcellular location is the cell projection. The protein localises to the axon. It localises to the dendritic spine. The protein resides in the dendrite. It is found in the cytoplasm. Its function is as follows. Stimulates GTP hydrolysis of members of the Rho family. Its action on RHOA activity and signaling is implicated in growth and stabilization of dendritic spines, and therefore in synaptic function. Critical for the stabilization of AMPA receptors at postsynaptic sites. Critical for the regulation of synaptic vesicle endocytosis at presynaptic terminals. Required for the localization of NR1D1 to dendrites, can suppress its repressor activity and protect it from proteasomal degradation. The sequence is that of Oligophrenin-1 (OPHN1) from Homo sapiens (Human).